A 202-amino-acid polypeptide reads, in one-letter code: CASP-like protein 2B1 (202 aa).

Residues 1-29 (MSYLGVGVSPGNVPVYHGTNSKVIDRRVR) lie on the Cytoplasmic side of the membrane. Residues 30–50 (LAELVLRCVICCLGVLAAVLV) form a helical membrane-spanning segment. Residues 51–72 (GTDTQVKEIFSIQKKARFTDMK) lie on the Extracellular side of the membrane. The helical transmembrane segment at 73 to 93 (ALVFLVAANGIAAAYSFVQGV) threads the bilayer. The Cytoplasmic portion of the chain corresponds to 94–109 (RCVVGMVKGSVLFSKP). The helical transmembrane segment at 110–132 (LAWVIFSGDQMMAYLTMSAVAAA) threads the bilayer. Over 133–164 (AQSSVFAKLGQPDLQWMKICTMYGKFCNQVGE) the chain is Extracellular. The chain crosses the membrane as a helical span at residues 165 to 185 (GIASALLVSVSMVVLSCISAF). The Cytoplasmic segment spans residues 186 to 202 (SLFRLYGGNKGKDGARW).

The protein belongs to the Casparian strip membrane proteins (CASP) family. In terms of assembly, homodimer and heterodimers.

The protein resides in the cell membrane. This Populus trichocarpa (Western balsam poplar) protein is CASP-like protein 2B1.